The following is a 390-amino-acid chain: Dual-specificity RNA methyltransferase RlmN (390 aa).

The Proton acceptor role is filled by E126. The region spanning 134 to 374 is the Radical SAM core domain; that stretch reads TEDRGAVCLS…APVRTPRGQD (241 aa). C141 and C379 form a disulfide bridge. Positions 148, 152, and 155 each coordinate [4Fe-4S] cluster. Residues 205-206, S237, 259-261, and N336 each bind S-adenosyl-L-methionine; these read GE and SLH. C379 acts as the S-methylcysteine intermediate in catalysis.

Belongs to the radical SAM superfamily. RlmN family. It depends on [4Fe-4S] cluster as a cofactor.

It is found in the cytoplasm. The catalysed reaction is adenosine(2503) in 23S rRNA + 2 reduced [2Fe-2S]-[ferredoxin] + 2 S-adenosyl-L-methionine = 2-methyladenosine(2503) in 23S rRNA + 5'-deoxyadenosine + L-methionine + 2 oxidized [2Fe-2S]-[ferredoxin] + S-adenosyl-L-homocysteine. It carries out the reaction adenosine(37) in tRNA + 2 reduced [2Fe-2S]-[ferredoxin] + 2 S-adenosyl-L-methionine = 2-methyladenosine(37) in tRNA + 5'-deoxyadenosine + L-methionine + 2 oxidized [2Fe-2S]-[ferredoxin] + S-adenosyl-L-homocysteine. In terms of biological role, specifically methylates position 2 of adenine 2503 in 23S rRNA and position 2 of adenine 37 in tRNAs. m2A2503 modification seems to play a crucial role in the proofreading step occurring at the peptidyl transferase center and thus would serve to optimize ribosomal fidelity. This chain is Dual-specificity RNA methyltransferase RlmN, found in Acidiphilium cryptum (strain JF-5).